We begin with the raw amino-acid sequence, 1028 residues long: Pro-apoptotic serine protease NMA111 (1028 aa).

Basic residues predominate over residues 1–10; sequence MEMSSKRKHS. Residues 1–39 are disordered; sequence MEMSSKRKHSSGPISLRSTKHLRSDTAASPQPLTPDDQT. A serine protease region spans residues 85-269; sequence VVSIHFCQTA…AATDYFLPLD (185 aa). Residues H123, D154, and S236 each act as charge relay system in the active site. PDZ domains are found at residues 292–377 and 878–959; these read QWII…LLVQ and IFCG…VTFD. A disordered region spans residues 1003–1028; that stretch reads SDNLNADAMDEGRDDGISDMEPDGEK. Residues 1019–1028 are compositionally biased toward acidic residues; sequence ISDMEPDGEK.

It belongs to the peptidase S1C family.

It localises to the nucleus. Its function is as follows. Nuclear serine protease which mediates apoptosis. This Ajellomyces capsulatus (strain NAm1 / WU24) (Darling's disease fungus) protein is Pro-apoptotic serine protease NMA111 (NMA111).